The primary structure comprises 353 residues: Phosphate acyltransferase (353 aa).

This sequence belongs to the PlsX family. Homodimer. Probably interacts with PlsY.

It localises to the cytoplasm. It carries out the reaction a fatty acyl-[ACP] + phosphate = an acyl phosphate + holo-[ACP]. Its pathway is lipid metabolism; phospholipid metabolism. Functionally, catalyzes the reversible formation of acyl-phosphate (acyl-PO(4)) from acyl-[acyl-carrier-protein] (acyl-ACP). This enzyme utilizes acyl-ACP as fatty acyl donor, but not acyl-CoA. This chain is Phosphate acyltransferase, found in Myxococcus xanthus (strain DK1622).